The primary structure comprises 154 residues: Myoglobin (154 aa).

Residues 2 to 148 (GLSDGEWQLV…FRNDIAAKYK (147 aa)) form the Globin domain. Residue Ser-4 is modified to Phosphoserine. His-65 provides a ligand contact to nitrite. O2 is bound at residue His-65. Position 68 is a phosphothreonine (Thr-68). His-94 is a binding site for heme b.

Belongs to the globin family. As to quaternary structure, monomeric.

Its subcellular location is the cytoplasm. It localises to the sarcoplasm. It catalyses the reaction Fe(III)-heme b-[protein] + nitric oxide + H2O = Fe(II)-heme b-[protein] + nitrite + 2 H(+). The enzyme catalyses H2O2 + AH2 = A + 2 H2O. In terms of biological role, monomeric heme protein which primary function is to store oxygen and facilitate its diffusion within muscle tissues. Reversibly binds oxygen through a pentacoordinated heme iron and enables its timely and efficient release as needed during periods of heightened demand. Depending on the oxidative conditions of tissues and cells, and in addition to its ability to bind oxygen, it also has a nitrite reductase activity whereby it regulates the production of bioactive nitric oxide. Under stress conditions, like hypoxia and anoxia, it also protects cells against reactive oxygen species thanks to its pseudoperoxidase activity. This chain is Myoglobin (MB), found in Tupaia glis (Common tree shrew).